The sequence spans 521 residues: uncharacterized protein (521 aa).

10 helical membrane passes run 103 to 123 (NLML…VPMP), 136 to 156 (FWFF…LWIT), 177 to 197 (YILF…FTAW), 200 to 220 (ITFT…GISF), 259 to 279 (AYAH…VYIV), 299 to 319 (IMYV…SSWI), 327 to 346 (YALV…VYVR), 358 to 378 (FVLV…LITM), 411 to 431 (CVAS…LHFG), and 450 to 470 (FKLT…ASYL).

It is found in the membrane. This is an uncharacterized protein from Schizosaccharomyces pombe (strain 972 / ATCC 24843) (Fission yeast).